Here is a 228-residue protein sequence, read N- to C-terminus: PKHD-type hydroxylase Reut_A2877 (228 aa).

A Fe2OG dioxygenase domain is found at 80–180 (IVYPPMFNRY…RVASFFWIQS (101 aa)). Residues H98, D100, and H161 each contribute to the Fe cation site. Residue R171 participates in 2-oxoglutarate binding.

Requires Fe(2+) as cofactor. It depends on L-ascorbate as a cofactor.

This chain is PKHD-type hydroxylase Reut_A2877, found in Cupriavidus pinatubonensis (strain JMP 134 / LMG 1197) (Cupriavidus necator (strain JMP 134)).